Consider the following 129-residue polypeptide: Large ribosomal subunit protein bL12c (129 aa).

It belongs to the bacterial ribosomal protein bL12 family. In terms of assembly, homodimer. Part of the ribosomal stalk of the 50S ribosomal subunit. Forms a multimeric L10(L12)X complex, where L10 forms an elongated spine to which 2 to 4 L12 dimers bind in a sequential fashion. Binds GTP-bound translation factors.

It is found in the plastid. The protein resides in the chloroplast. In terms of biological role, forms part of the ribosomal stalk which helps the ribosome interact with GTP-bound translation factors. Is thus essential for accurate translation. The polypeptide is Large ribosomal subunit protein bL12c (Pyropia yezoensis (Susabi-nori)).